A 187-amino-acid chain; its full sequence is GTP cyclohydrolase 1 (187 aa).

Residues Cys-78, His-81, and Cys-150 each coordinate Zn(2+).

The protein belongs to the GTP cyclohydrolase I family. Homomer.

The enzyme catalyses GTP + H2O = 7,8-dihydroneopterin 3'-triphosphate + formate + H(+). It participates in cofactor biosynthesis; 7,8-dihydroneopterin triphosphate biosynthesis; 7,8-dihydroneopterin triphosphate from GTP: step 1/1. The polypeptide is GTP cyclohydrolase 1 (Brevibacillus brevis (strain 47 / JCM 6285 / NBRC 100599)).